The following is a 103-amino-acid chain: UPF0298 protein LACR_0404 (103 aa).

It belongs to the UPF0298 family.

Its subcellular location is the cytoplasm. The protein is UPF0298 protein LACR_0404 of Lactococcus lactis subsp. cremoris (strain SK11).